The primary structure comprises 156 residues: ATP synthase subunit b (156 aa).

Residues 7–27 (LFAQIIVFFGLVWFTMKFVWP) traverse the membrane as a helical segment.

The protein belongs to the ATPase B chain family. In terms of assembly, F-type ATPases have 2 components, F(1) - the catalytic core - and F(0) - the membrane proton channel. F(1) has five subunits: alpha(3), beta(3), gamma(1), delta(1), epsilon(1). F(0) has three main subunits: a(1), b(2) and c(10-14). The alpha and beta chains form an alternating ring which encloses part of the gamma chain. F(1) is attached to F(0) by a central stalk formed by the gamma and epsilon chains, while a peripheral stalk is formed by the delta and b chains.

The protein localises to the cell inner membrane. Functionally, f(1)F(0) ATP synthase produces ATP from ADP in the presence of a proton or sodium gradient. F-type ATPases consist of two structural domains, F(1) containing the extramembraneous catalytic core and F(0) containing the membrane proton channel, linked together by a central stalk and a peripheral stalk. During catalysis, ATP synthesis in the catalytic domain of F(1) is coupled via a rotary mechanism of the central stalk subunits to proton translocation. Component of the F(0) channel, it forms part of the peripheral stalk, linking F(1) to F(0). The polypeptide is ATP synthase subunit b (Neisseria meningitidis serogroup C (strain 053442)).